A 511-amino-acid polypeptide reads, in one-letter code: Glucans biosynthesis protein G (511 aa).

The first 22 residues, 1 to 22 (MMKMRWLSAAVMLTLYTSSSWA), serve as a signal peptide directing secretion.

Belongs to the OpgD/OpgG family.

It is found in the periplasm. Its pathway is glycan metabolism; osmoregulated periplasmic glucan (OPG) biosynthesis. Functionally, involved in the biosynthesis of osmoregulated periplasmic glucans (OPGs). The sequence is that of Glucans biosynthesis protein G from Shigella boydii serotype 4 (strain Sb227).